A 472-amino-acid polypeptide reads, in one-letter code: 2-methylcitrate synthase, mitochondrial (472 aa).

The transit peptide at 1 to 29 (MALNLTSSRRALGSLKPLTRAAFSGVRGY) directs the protein to the mitochondrion. CoA-binding residues include Arg75 and Lys193. His271 contributes to the oxaloacetate binding site. Leu306 contributes to the CoA binding site. Residue His307 is part of the active site. CoA contacts are provided by Val348, Gly350, and Tyr351. The oxaloacetate site is built by His353 and Arg362. Residue His353 is part of the active site. The CoA site is built by Thr402, Lys403, and Asn408. Asp410 is an active-site residue. Positions 436 and 456 each coordinate oxaloacetate.

Belongs to the citrate synthase family. Homodimer.

The protein localises to the mitochondrion matrix. The catalysed reaction is propanoyl-CoA + oxaloacetate + H2O = (2S,3S)-2-methylcitrate + CoA + H(+). It catalyses the reaction oxaloacetate + acetyl-CoA + H2O = citrate + CoA + H(+). It functions in the pathway organic acid metabolism; propanoate degradation. Component of the methylcitrate cycle that catalyzes the synthesis of (2S,3S)-2-methylcitrate from propionyl-CoA and oxaloacetate. Plays an important role in detoxification of propionyl-CoA, an inhibitor of both primary and secondary metabolism. Also has citrate synthase activity using as substrates acetyl-CoA and oxaloacetate. The polypeptide is 2-methylcitrate synthase, mitochondrial (Gibberella moniliformis (Maize ear and stalk rot fungus)).